The sequence spans 933 residues: Progesterone receptor (933 aa).

Positions 1–164 are AF3; mediates transcriptional activation; the sequence is MTELKAKGPR…PATQGVLSPL (164 aa). The interval 1–256 is disordered; sequence MTELKAKGPR…AAAGGGAAAV (256 aa). Residues 1 to 566 are modulating, Pro-Rich; it reads MTELKAKGPR…YSFESLPQKI (566 aa). A Phosphoserine modification is found at Ser20. An LXXL motif 1 motif is present at residues 55-59; the sequence is LDGLL. Residue Ser81 is modified to Phosphoserine. The LXXL motif 2 signature appears at 115 to 119; it reads LETLL. Phosphoserine is present on residues Ser130 and Ser162. The mediates transcriptional transrepression stretch occupies residues 165–305; that stretch reads MSRSGGKAGD…LATTVMDFIH (141 aa). Residues 183–187 carry the Nuclear localization signal motif; that stretch reads KVLPR. Ser190 and Ser213 each carry phosphoserine. A compositionally biased stretch (acidic residues) spans 220–231; that stretch reads EVEEEDGSESEE. Over residues 232 to 246 the composition is skewed to low complexity; sequence SAGPLLKGKPRALGG. Position 294 is a phosphoserine; by MAPK1 (Ser294). The tract at residues 331–378 is disordered; sequence GGAGAASAFAPPRSSPSASSTPVAVGDFPDCAYPPDAEPKDDAYPLYS. A compositionally biased stretch (low complexity) spans 335-350; it reads AASAFAPPRSSPSASS. Ser345 carries the post-translational modification Phosphoserine; by MAPK. Lys388 is covalently cross-linked (Glycyl lysine isopeptide (Lys-Gly) (interchain with G-Cter in SUMO); alternate). A Glycyl lysine isopeptide (Lys-Gly) (interchain with G-Cter in ubiquitin); alternate cross-link involves residue Lys388. At Ser400 the chain carries Phosphoserine; by CDK2. The disordered stretch occupies residues 415–452; that stretch reads PDFPLGPPPPLPPRAPPSRPGEAAVTAAPASASVSSAS. Positions 418-433 are enriched in pro residues; sequence PLGPPPPLPPRAPPSR. Residues 434 to 452 show a composition bias toward low complexity; the sequence is PGEAAVTAAPASASVSSAS. The interval 456-546 is AF1; mediates transcriptional activation; that stretch reads STLECILYKA…VYPPYLNYLR (91 aa). A Glycyl lysine isopeptide (Lys-Gly) (interchain with G-Cter in SUMO) cross-link involves residue Lys531. 2 consecutive NR C4-type zinc fingers follow at residues 567–587 and 603–627; these read CLIC…CGSC and CAGR…LRKC. Residues 567–639 constitute a DNA-binding region (nuclear receptor); it reads CLICGDEASG…AGMVLGGRKF (73 aa). Ser676 carries the post-translational modification Phosphoserine. The region spanning 679–913 is the NR LBD domain; the sequence is QDIQLIPPLI…EFPEMMSEVI (235 aa). Residues 687 to 933 are AF2; mediates transcriptional activation; sequence LINLLMSIEP…MVKPLLFHKK (247 aa). A progesterone-binding site is contributed by Arg766.

This sequence belongs to the nuclear hormone receptor family. Interacts with SMARD1 and UNC45A. Interacts with CUEDC2; the interaction promotes ubiquitination, decreases sumoylation, and represses transcriptional activity. Interacts with PIAS3; the interaction promotes sumoylation of PR in a hormone-dependent manner, inhibits DNA-binding, and alters nuclear export. Interacts with SP1; the interaction requires ligand-induced phosphorylation on Ser-345 by ERK1/2-MAPK. Interacts with PRMT2. Interacts with NCOA2 and NCOA1. Interacts with KLF9. Interacts with GTF2B. In terms of processing, phosphorylated on multiple serine sites. Several of these sites are hormone-dependent. Phosphorylation on Ser-294 is highly hormone-dependent and modulates ubiquitination and sumoylation on Lys-388. Phosphorylation on Ser-102 and Ser-345 also requires induction by hormone. Basal phosphorylation on Ser-81, Ser-162, Ser-190 and Ser-400 is increased in response to progesterone and can be phosphorylated in vitro by the CDK2-A1 complex. Increased levels of phosphorylation on Ser-400 also in the presence of EGF, heregulin, IGF, PMA and FBS. Phosphorylation at this site by CDK2 is ligand-independent, and increases nuclear translocation and transcriptional activity. Phosphorylation at Ser-162 and Ser-294, but not at Ser-190, is impaired during the G(2)/M phase of the cell cycle. Phosphorylation on Ser-345 by ERK1/2 MAPK is required for interaction with SP1. Post-translationally, sumoylation is hormone-dependent and represses transcriptional activity. Sumoylation on all three sites is enhanced by PIAS3. Desumoylated by SENP1. Sumoylation on Lys-388, the main site of sumoylation, is repressed by ubiquitination on the same site, and modulated by phosphorylation at Ser-294. Ubiquitination is hormone-dependent and represses sumoylation on the same site. Promoted by MAPK-mediated phosphorylation on Ser-294. Ubiquitinated by UBR5, leading to its degradation: UBR5 specifically recognizes and binds ligand-bound PGR when it is not associated with coactivators (NCOAs). In presence of NCOAs, the UBR5-degron is not accessible, preventing its ubiquitination and degradation. In terms of processing, palmitoylated by ZDHHC7 and ZDHHC21. Palmitoylation is required for plasma membrane targeting and for rapid intracellular signaling via ERK and AKT kinases and cAMP generation.

It localises to the nucleus. Its subcellular location is the cytoplasm. Functionally, the steroid hormones and their receptors are involved in the regulation of eukaryotic gene expression and affect cellular proliferation and differentiation in target tissues. Transcriptional activator of several progesteron-dependent promoters in a variety of cell types. Involved in activation of SRC-dependent MAPK signaling on hormone stimulation. This chain is Progesterone receptor (PGR), found in Gorilla gorilla gorilla (Western lowland gorilla).